A 249-amino-acid chain; its full sequence is Small ribosomal subunit protein uS4m (249 aa).

Positions 133–193 (RRLDIIIYRA…PEIVNLLRNQ (61 aa)) constitute an S4 RNA-binding domain.

Belongs to the universal ribosomal protein uS4 family.

It is found in the mitochondrion. The chain is Small ribosomal subunit protein uS4m (RPS4) from Reclinomonas americana.